Reading from the N-terminus, the 298-residue chain is 2-dehydropantoate 2-reductase (298 aa).

NADP(+) is bound by residues 7 to 12, N98, and A124; that span reads GGGSVG. N98 is a substrate binding site. K179 acts as the Proton donor in catalysis. Residues N183, N187, N197, and S246 each coordinate substrate. E258 contacts NADP(+).

It belongs to the ketopantoate reductase family.

It localises to the cytoplasm. The enzyme catalyses (R)-pantoate + NADP(+) = 2-dehydropantoate + NADPH + H(+). It functions in the pathway cofactor biosynthesis; (R)-pantothenate biosynthesis; (R)-pantoate from 3-methyl-2-oxobutanoate: step 2/2. Its function is as follows. Catalyzes the NADPH-dependent reduction of ketopantoate into pantoic acid. In Bacillus subtilis (strain 168), this protein is 2-dehydropantoate 2-reductase (panE).